The sequence spans 328 residues: Alanine racemase (328 aa).

Lys-33 functions as the Proton acceptor; specific for D-alanine in the catalytic mechanism. Lys-33 bears the N6-(pyridoxal phosphate)lysine mark. Arg-118 is a substrate binding site. Tyr-237 functions as the Proton acceptor; specific for L-alanine in the catalytic mechanism. Met-283 contributes to the substrate binding site.

Belongs to the alanine racemase family. Pyridoxal 5'-phosphate is required as a cofactor.

It carries out the reaction L-alanine = D-alanine. It participates in amino-acid biosynthesis; D-alanine biosynthesis; D-alanine from L-alanine: step 1/1. In terms of biological role, catalyzes the interconversion of L-alanine and D-alanine. May also act on other amino acids. This is Alanine racemase (alr) from Campylobacter jejuni subsp. jejuni serotype O:2 (strain ATCC 700819 / NCTC 11168).